A 118-amino-acid polypeptide reads, in one-letter code: Ribonuclease P protein component 2 (118 aa).

The protein belongs to the eukaryotic/archaeal RNase P protein component 2 family. Consists of a catalytic RNA component and at least 4-5 protein subunits.

The protein localises to the cytoplasm. The catalysed reaction is Endonucleolytic cleavage of RNA, removing 5'-extranucleotides from tRNA precursor.. Its function is as follows. Part of ribonuclease P, a protein complex that generates mature tRNA molecules by cleaving their 5'-ends. The chain is Ribonuclease P protein component 2 from Pyrococcus abyssi (strain GE5 / Orsay).